The sequence spans 398 residues: Nicotinate phosphoribosyltransferase 2 (398 aa).

His224 is modified (phosphohistidine; by autocatalysis).

The protein belongs to the NAPRTase family. Transiently phosphorylated on a His residue during the reaction cycle. Phosphorylation strongly increases the affinity for substrates and increases the rate of nicotinate D-ribonucleotide production. Dephosphorylation regenerates the low-affinity form of the enzyme, leading to product release.

It catalyses the reaction nicotinate + 5-phospho-alpha-D-ribose 1-diphosphate + ATP + H2O = nicotinate beta-D-ribonucleotide + ADP + phosphate + diphosphate. Its pathway is cofactor biosynthesis; NAD(+) biosynthesis; nicotinate D-ribonucleotide from nicotinate: step 1/1. Catalyzes the synthesis of beta-nicotinate D-ribonucleotide from nicotinate and 5-phospho-D-ribose 1-phosphate at the expense of ATP. In Pseudomonas aeruginosa (strain ATCC 15692 / DSM 22644 / CIP 104116 / JCM 14847 / LMG 12228 / 1C / PRS 101 / PAO1), this protein is Nicotinate phosphoribosyltransferase 2.